The sequence spans 299 residues: Phosphatidylinositol-3-phosphatase (299 aa).

Positions 1–43 are cleaved as a signal peptide; the sequence is MLRGIQALSRPLTRVYRALAVIGVLAASLLASWVGAVPQVGLA.

As to quaternary structure, monomer. SapM interacts with host RAB7 via its C-terminus. Requires a metal cation as cofactor.

The protein localises to the secreted. Its subcellular location is the host cytoplasmic vesicle. It localises to the host phagosome. It carries out the reaction a phosphate monoester + H2O = an alcohol + phosphate. The enzyme catalyses a 1,2-diacyl-sn-glycero-3-phospho-(1D-myo-inositol-3-phosphate) + H2O = a 1,2-diacyl-sn-glycero-3-phospho-(1D-myo-inositol) + phosphate. Phosphatase activity is inhibited in vitro by low concentrations of several heavy metals (zinc chloride, sodium molybdate, magnesium chloride, and copper sulfate) and moderately high concentrations (&gt;8 mM) of EDTA. In terms of biological role, virulence factor that plays an important role in blocking phagosome-lysosome fusion and thus participates in the intracellular survival of the pathogen. Acts as a phosphatase that dephosphorylates phosphatidylinositol 3-phosphate (PI3P), a membrane trafficking regulatory lipid essential for phagosomal acquisition of lysosomal constituents. Therefore, SapM eliminates PI3P from the phagosomal membrane by catalyzing its hydrolysis, and thus contributes to inhibition of phagosome maturation. Also interferes with autophagy: SapM blocks autophagosome-lysosome fusion in macrophages by binding to the small GTPase RAB7, which prevents RAB7 from being involved in this process and thus negatively regulates autophagy flux. In vitro, displays phosphatase activity with broad specificity; can dephosphorylate a variety of phosphoester substrates, with the highest activity against phosphoenolpyruvate, glycerophosphate, GTP, NADPH, phosphotyrosine and trehalose-6-phosphate. In contrast, the enzyme exhibits poor activity against glucose-6-phosphate, phosphothreonine, and a number of nucleotides (NADP, ATP, AMP, and GMP). This Mycobacterium tuberculosis (strain ATCC 25618 / H37Rv) protein is Phosphatidylinositol-3-phosphatase.